A 626-amino-acid polypeptide reads, in one-letter code: MCSTLKKCGTYRTEVAECHDHGSTFQGRKKGGSSFRDNFDKRSCHYEHGGYERPPSHCQENDGSVEMRDVHKDQQLRHTPYSIRCERRMKWHSEDEIRITTWRNRKPPERKMSQNTQDGYTRNWFKVTIPYGIKYDKAWLMNSIQSHCSDRFTPVDFHYVRNRACFFVQDASAASALKDVSYKIYDDENQKICIFVNHSTAPYSVKNKLKPGQMEMLKLTMNKRYNVSQQALDLQNLRFDPDLMGRDIDIILNRRNCMAATLKIIERNFPELLSLNLCNNKLYQLDGLSDITEKAPKVKTLNLSKNKLESAWELGKVKGLKLEELWLEGNPLCSTFSDQSAYVSAIRDCFPKLLRLDGRELSAPVIVDIDSSETMKPCKENFTGSETLKHLVLQFLQQYYSIYDSGDRQGLLGAYHDEACFSLAIPFDPKDSAPSSLCKYFEDSRNMKTLKDPYLKGELLRRTKRDIVDSLSALPKTQHDLSSILVDVWCQTERMLCFSVNGVFKEVEGQSQGSVLAFTRTFIATPGSSSSLCIVNDELFVRDASPQETQSAFSIPVSTLSSSSEPSLSQEQQEMVQAFSAQSGMKLEWSQKCLQDNEWNYTRAGQAFTMLQTEGKIPAEAFKQIS.

Ser34 is modified (phosphoserine). Residues 124–203 form the RRM domain; the sequence is WFKVTIPYGI…IFVNHSTAPY (80 aa). LRR repeat units lie at residues 271-296, 297-320, 321-348, and 349-376; these read ELLS…EKAP, KVKT…VKGL, KLEE…AIRD, and CFPK…ETMK. The NTF2 domain maps to 391–541; it reads LVLQFLQQYY…LCIVNDELFV (151 aa). Positions 570-625 constitute a TAP-C domain; that stretch reads QEQQEMVQAFSAQSGMKLEWSQKCLQDNEWNYTRAGQAFTMLQTEGKIPAEAFKQI.

Belongs to the NXF family. In terms of assembly, interacts with NXT1, NXT2, E1B-AP5, the REF proteins and with nucleoporins, Nup62, Nup153 and Nup214. Interacts with LUZP4. Expressed almost exclusively in testis. Also expressed in several cancers.

It localises to the nucleus. The protein resides in the nucleoplasm. It is found in the cytoplasm. In terms of biological role, involved in the export of mRNA from the nucleus to the cytoplasm. This chain is Nuclear RNA export factor 2 (NXF2), found in Homo sapiens (Human).